A 324-amino-acid chain; its full sequence is tRNA dimethylallyltransferase (324 aa).

ATP is bound at residue 17 to 24 (GPTASGKT). 19–24 (TASGKT) lines the substrate pocket. Interaction with substrate tRNA regions lie at residues 42–45 (DSAL), 166–170 (QRIQR), and 251–256 (RCVGYR).

It belongs to the IPP transferase family. As to quaternary structure, monomer. Mg(2+) is required as a cofactor.

The enzyme catalyses adenosine(37) in tRNA + dimethylallyl diphosphate = N(6)-dimethylallyladenosine(37) in tRNA + diphosphate. Its function is as follows. Catalyzes the transfer of a dimethylallyl group onto the adenine at position 37 in tRNAs that read codons beginning with uridine, leading to the formation of N6-(dimethylallyl)adenosine (i(6)A). The sequence is that of tRNA dimethylallyltransferase from Burkholderia mallei (strain NCTC 10247).